We begin with the raw amino-acid sequence, 290 residues long: MADLSFIEDAVAFPEKEEDEEEEEEGVEWGYEEGVEWGLVFPDANGEYQSPINLNSREARYDPSLLDVRLSPNYVVCRDCEVTNDGHTIQVILKSKSVLSGGPLPQGQEFELYEVRFHWGRENQRGSEHTVNFKAFPMELHLIHWNSTLFGSIDEAVGKPHGIVIIALFVQIGKEHVGLKAVTEILQDIQYKGKSKTIPCFNPNTLLPDPLLRDYWVYEGSLTIPPCSEGVTWILFRYPLTISQLQIEEFRRLRTHVKGAELVEGCDGILGDNFRPTQPLSDRVIRAAFQ.

Residue S5 is modified to Phosphoserine. Residues V27–F289 enclose the Alpha-carbonic anhydrase domain. H87 acts as the Proton donor/acceptor in catalysis. The Zn(2+) site is built by H118 and H141.

This sequence belongs to the alpha-carbonic anhydrase family.

Does not have a carbonic anhydrase catalytic activity. The polypeptide is Carbonic anhydrase-related protein (Ca8) (Rattus norvegicus (Rat)).